The primary structure comprises 277 residues: Energy-coupling factor transporter ATP-binding protein EcfA1 (277 aa).

The ABC transporter domain maps to 4-238 (IETKNLNYSY…SELLSKNDLK (235 aa)). ATP is bound at residue 38–45 (GKNGSGKS).

This sequence belongs to the ABC transporter superfamily. Energy-coupling factor EcfA family. As to quaternary structure, forms a stable energy-coupling factor (ECF) transporter complex composed of 2 membrane-embedded substrate-binding proteins (S component), 2 ATP-binding proteins (A component) and 2 transmembrane proteins (T component).

It is found in the cell membrane. Its function is as follows. ATP-binding (A) component of a common energy-coupling factor (ECF) ABC-transporter complex. Unlike classic ABC transporters this ECF transporter provides the energy necessary to transport a number of different substrates. The sequence is that of Energy-coupling factor transporter ATP-binding protein EcfA1 from Oenococcus oeni (strain ATCC BAA-331 / PSU-1).